A 312-amino-acid chain; its full sequence is MTELETKENKKQIYNFNKLQKRLRRNVGNAIADFNMIEDGDKVMVCLSGGKDSYTLLDILLNLRHNAPVHFDIVAVNLDQKQPGFPEHILPEYLSSIGVEYKIVEENTYGIVKEKIPEGKTTCSLCSRLRRGILYRTATELGATKIALGHHRDDMLETLFLNMFYGGKLKSMPPKLVSDDGKQIVIRPLAYCKEKDIEKYAVAKQFPIIPCNLCGSQPNLQRQVIKEMLQTWDRRYPGRIETMFSAIQNITPSHLCDPNLFDFKNIKRGQLPKGVEGDIAFDKEELPQTPIIDEDTEDFVNNGQLIRFKEVN.

The short motif at 48–53 is the PP-loop motif element; that stretch reads SGGKDS. Residues Cys123, Cys126, and Cys214 each contribute to the [4Fe-4S] cluster site.

Belongs to the TtcA family. Homodimer. Mg(2+) serves as cofactor. It depends on [4Fe-4S] cluster as a cofactor.

The protein resides in the cytoplasm. The catalysed reaction is cytidine(32) in tRNA + S-sulfanyl-L-cysteinyl-[cysteine desulfurase] + AH2 + ATP = 2-thiocytidine(32) in tRNA + L-cysteinyl-[cysteine desulfurase] + A + AMP + diphosphate + H(+). Its pathway is tRNA modification. Its function is as follows. Catalyzes the ATP-dependent 2-thiolation of cytidine in position 32 of tRNA, to form 2-thiocytidine (s(2)C32). The sulfur atoms are provided by the cysteine/cysteine desulfurase (IscS) system. In Mannheimia succiniciproducens (strain KCTC 0769BP / MBEL55E), this protein is tRNA-cytidine(32) 2-sulfurtransferase.